A 322-amino-acid polypeptide reads, in one-letter code: Protein mono-ADP-ribosyltransferase PARP16 (322 aa).

The Cytoplasmic portion of the chain corresponds to 1-287 (MQLSNRAAAR…RASSQLSWLS (287 aa)). Positions 5–91 (NRAAAREAAS…AWDLVSWILS (87 aa)) constitute a PARP alpha-helical domain. The PARP catalytic domain maps to 94–279 (ILTIHSAKKA…VYSQKQPKRA (186 aa)). Positions 152, 182, and 254 each coordinate NAD(+). The helical transmembrane segment at 288-308 (SHWFVIMMSLYLLLLLIVSVT) threads the bilayer. The Lumenal portion of the chain corresponds to 309–322 (NSSVFHHFWNRVKR).

The protein belongs to the ARTD/PARP family. In terms of assembly, interacts with KPNB1. In terms of processing, auto-mono-ADP-ribosylated.

It localises to the endoplasmic reticulum membrane. It carries out the reaction L-aspartyl-[protein] + NAD(+) = 4-O-(ADP-D-ribosyl)-L-aspartyl-[protein] + nicotinamide. The catalysed reaction is L-lysyl-[protein] + NAD(+) = N(6)-(ADP-D-ribosyl)-L-lysyl-[protein] + nicotinamide + H(+). The enzyme catalyses L-glutamyl-[protein] + NAD(+) = 5-O-(ADP-D-ribosyl)-L-glutamyl-[protein] + nicotinamide. With respect to regulation, in absence of activation signal, PARP16 is autoinhibited by the PARP alpha-helical domain (also named HD region), which prevents effective NAD(+)-binding. Activity is highly stimulated by signals, which unfold the PARP alpha-helical domain, relieving autoinhibition. In terms of biological role, intracellular mono-ADP-ribosyltransferase that plays a role in different processes, such as protein translation and unfolded protein response (UPR), through the mono-ADP-ribosylation of proteins involved in those processes. Acts as an inhibitor of protein translation by catalyzing mono-ADP-ribosylation of ribosomal subunits, such as RPL14 and RPS6, thereby inhibiting polysome assembly and mRNA loading. Mono-ADP-ribosylation of ribosomal subunits is promoted by NMNAT2. Involved in the unfolded protein response (UPR) by ADP-ribosylating and activating EIF2AK3 and ERN1, two important UPR effectors. May also mediate mono-ADP-ribosylation of karyopherin KPNB1 a nuclear import factor. May not modify proteins on arginine or cysteine residues compared to other mono-ADP-ribosyltransferases. The polypeptide is Protein mono-ADP-ribosyltransferase PARP16 (Mus musculus (Mouse)).